Consider the following 143-residue polypeptide: Large ribosomal subunit protein uL11 (143 aa).

The protein belongs to the universal ribosomal protein uL11 family. In terms of assembly, part of the ribosomal stalk of the 50S ribosomal subunit. Interacts with L10 and the large rRNA to form the base of the stalk. L10 forms an elongated spine to which L12 dimers bind in a sequential fashion forming a multimeric L10(L12)X complex. Post-translationally, one or more lysine residues are methylated.

In terms of biological role, forms part of the ribosomal stalk which helps the ribosome interact with GTP-bound translation factors. The chain is Large ribosomal subunit protein uL11 from Pseudomonas paraeruginosa (strain DSM 24068 / PA7) (Pseudomonas aeruginosa (strain PA7)).